The chain runs to 84 residues: Large ribosomal subunit protein bL27 (84 aa).

The interval 1–25 (MAHKKGAGSTKNGRDSKPKMLGVKR) is disordered.

The protein belongs to the bacterial ribosomal protein bL27 family.

The polypeptide is Large ribosomal subunit protein bL27 (Dehalococcoides mccartyi (strain ATCC BAA-2266 / KCTC 15142 / 195) (Dehalococcoides ethenogenes (strain 195))).